Here is a 189-residue protein sequence, read N- to C-terminus: Pyridoxal 5'-phosphate synthase subunit PdxT (189 aa).

52 to 54 (GES) lines the L-glutamine pocket. Catalysis depends on Cys-81, which acts as the Nucleophile. L-glutamine-binding positions include Arg-108 and 136–137 (IR). Catalysis depends on charge relay system residues His-172 and Glu-174.

This sequence belongs to the glutaminase PdxT/SNO family. As to quaternary structure, in the presence of PdxS, forms a dodecamer of heterodimers. Only shows activity in the heterodimer.

The catalysed reaction is aldehydo-D-ribose 5-phosphate + D-glyceraldehyde 3-phosphate + L-glutamine = pyridoxal 5'-phosphate + L-glutamate + phosphate + 3 H2O + H(+). It catalyses the reaction L-glutamine + H2O = L-glutamate + NH4(+). It participates in cofactor biosynthesis; pyridoxal 5'-phosphate biosynthesis. In terms of biological role, catalyzes the hydrolysis of glutamine to glutamate and ammonia as part of the biosynthesis of pyridoxal 5'-phosphate. The resulting ammonia molecule is channeled to the active site of PdxS. This Haemophilus ducreyi (strain 35000HP / ATCC 700724) protein is Pyridoxal 5'-phosphate synthase subunit PdxT.